A 357-amino-acid chain; its full sequence is Ketoreductase CTB6 (357 aa).

Y172 contacts NADP(+).

Belongs to the NAD(P)-dependent epimerase/dehydratase family. Dihydroflavonol-4-reductase subfamily.

Its pathway is mycotoxin biosynthesis. Its function is as follows. Ketoreductase; part of the gene cluster that mediates the biosynthesis of cercosporin, a light-activated, non-host-selective toxin. The perylenequinone chromophore of cercosporin absorbs light energy to attain an electronically-activated triplet state and produces active oxygen species such as the hydroxyl radical, superoxide, hydrogen peroxide or singlet oxygen upon reaction with oxygen molecules. These reactive oxygen species cause damage to various cellular components including lipids, proteins and nucleic acids. The first step of cercosporin biosynthesis is performed by the polyketide synthase CTB1 which catalyzes the formation of nor-toralactone. The starter unit acyltransferase (SAT) domain of CTB1 initiates polyketide extension by the selective utilization of acetyl-CoA, which is elongated to the heptaketide in the beta-ketoacyl synthase (KS) domain by successive condensations with six malonyl units introduced by the malonyl acyltransferase (MAT) domain. The product template (PT) domain catalyzes C4-C9 and C2-C11 aldol cyclizations and dehydrations to a trihydroxynaphthalene, which is thought to be delivered to the thioesterase (TE) domain for product release. The bifunctional enzyme CTB3 then methylates nor-toralactone to toralactone before conducting an unusual oxidative aromatic ring opening. The O-methyltransferase CTB2 further methylates the nascent OH-6 of the CBT3 product, blocking further oxidation at this site before the reductase CTB6 reduces the 2-oxopropyl ketone at position C7, giving naphthalene. The FAD-dependent monooxygenase CTB5 in concert with the multicopper oxidase CTB12 are responsible for homodimerization of naphthalene with CTB7 installing the dioxepine moiety, finally producing cercosporin. The fasciclin domain-containing protein CTB11 might act with CTB5 and CTB12 whereas the roles of CTB9 and CTB10 have still to be elucidated. This Cercospora beticola (Sugarbeet leaf spot fungus) protein is Ketoreductase CTB6.